We begin with the raw amino-acid sequence, 334 residues long: uncharacterized protein (334 aa).

The next 2 membrane-spanning stretches (helical) occupy residues 1–21 and 46–66; these read MFRL…FTFI and ILGL…IIII.

The protein localises to the cell membrane. This is an uncharacterized protein from Rickettsia prowazekii (strain Madrid E).